The sequence spans 496 residues: Cytochrome P450 3A30 (496 aa).

A heme-binding site is contributed by Cys441.

It belongs to the cytochrome P450 family. Requires heme as cofactor. Highly expressed in liver and intestine. Moderate expression in gill and spleen. Low expression in kidney, brain and heart.

The protein resides in the endoplasmic reticulum membrane. It localises to the microsome membrane. It carries out the reaction an organic molecule + reduced [NADPH--hemoprotein reductase] + O2 = an alcohol + oxidized [NADPH--hemoprotein reductase] + H2O + H(+). Putative steroid 6-beta-hydroxylase. The sequence is that of Cytochrome P450 3A30 (cyp3a30) from Fundulus heteroclitus (Killifish).